Consider the following 325-residue polypeptide: Cytochrome f (325 aa).

Residues 1–40 form the signal peptide; sequence MKTPELMAIWQRLKTACLVAIATFGLFFASDVLFPQAAAA. Positions 41, 62, 65, and 66 each coordinate heme. The helical transmembrane segment at 290–309 threads the bilayer; that stretch reads IYGYMAFVAGIMLTQIFLVL.

This sequence belongs to the cytochrome f family. The 4 large subunits of the cytochrome b6-f complex are cytochrome b6, subunit IV (17 kDa polypeptide, PetD), cytochrome f and the Rieske protein, while the 4 small subunits are PetG, PetL, PetM and PetN. The complex functions as a dimer. Requires heme as cofactor.

Its subcellular location is the cellular thylakoid membrane. Its function is as follows. Component of the cytochrome b6-f complex, which mediates electron transfer between photosystem II (PSII) and photosystem I (PSI), cyclic electron flow around PSI, and state transitions. This chain is Cytochrome f (petA), found in Picosynechococcus sp. (strain ATCC 27264 / PCC 7002 / PR-6) (Agmenellum quadruplicatum).